Reading from the N-terminus, the 491-residue chain is NADH-quinone oxidoreductase subunit N 1 (491 aa).

14 helical membrane-spanning segments follow: residues 15-35, 41-61, 77-97, 105-125, 130-150, 165-185, 211-231, 247-269, 279-299, 307-327, 333-353, 378-398, 416-436, and 459-479; these read VLGM…VDMF, VLLT…ALDY, FGVL…LIAF, LSQG…LFLV, LVTI…LTGF, LLLG…IYGM, PILL…VSMF, PVTA…RFLN, WQLL…IVAV, MLAY…LAAS, AFTV…AVLI, LALA…TAGF, LAII…RVIV, and LGVI…NIFT.

The protein belongs to the complex I subunit 2 family. In terms of assembly, NDH-1 is composed of 14 different subunits. Subunits NuoA, H, J, K, L, M, N constitute the membrane sector of the complex.

The protein localises to the cell membrane. The enzyme catalyses a quinone + NADH + 5 H(+)(in) = a quinol + NAD(+) + 4 H(+)(out). Its function is as follows. NDH-1 shuttles electrons from NADH, via FMN and iron-sulfur (Fe-S) centers, to quinones in the respiratory chain. The immediate electron acceptor for the enzyme in this species is believed to be ubiquinone. Couples the redox reaction to proton translocation (for every two electrons transferred, four hydrogen ions are translocated across the cytoplasmic membrane), and thus conserves the redox energy in a proton gradient. The polypeptide is NADH-quinone oxidoreductase subunit N 1 (Herpetosiphon aurantiacus (strain ATCC 23779 / DSM 785 / 114-95)).